The following is a 148-amino-acid chain: Transcriptional repressor NrdR (148 aa).

Residues 1–22 (MKCPYCSAPDSKVVNSRPSDDG) are disordered. A zinc finger lies at 3–34 (CPYCSAPDSKVVNSRPSDDGASIRRRRECLNC). The ATP-cone domain maps to 49–136 (LMVVKRSGPR…VYRDFDSLER (88 aa)).

It belongs to the NrdR family. The cofactor is Zn(2+).

Its function is as follows. Negatively regulates transcription of bacterial ribonucleotide reductase nrd genes and operons by binding to NrdR-boxes. This chain is Transcriptional repressor NrdR, found in Deinococcus deserti (strain DSM 17065 / CIP 109153 / LMG 22923 / VCD115).